We begin with the raw amino-acid sequence, 495 residues long: Glycerol kinase (495 aa).

ADP is bound at residue Thr16. ATP contacts are provided by Thr16 and Thr17. A sn-glycerol 3-phosphate-binding site is contributed by Thr16. ADP is bound at residue Arg20. Residues Arg86, Glu87, Tyr138, and Asp246 each contribute to the sn-glycerol 3-phosphate site. Arg86, Glu87, Tyr138, Asp246, and Gln247 together coordinate glycerol. ADP-binding residues include Thr268 and Gly316. ATP contacts are provided by Thr268, Gly316, Gln320, and Gly417. ADP is bound by residues Gly417 and Asn421.

It belongs to the FGGY kinase family.

The enzyme catalyses glycerol + ATP = sn-glycerol 3-phosphate + ADP + H(+). It participates in polyol metabolism; glycerol degradation via glycerol kinase pathway; sn-glycerol 3-phosphate from glycerol: step 1/1. With respect to regulation, inhibited by fructose 1,6-bisphosphate (FBP). In terms of biological role, key enzyme in the regulation of glycerol uptake and metabolism. Catalyzes the phosphorylation of glycerol to yield sn-glycerol 3-phosphate. This Synechocystis sp. (strain ATCC 27184 / PCC 6803 / Kazusa) protein is Glycerol kinase.